The sequence spans 77 residues: Putative snRNP Sm-like protein (77 aa).

Positions 4–76 (RPLDVLNRSL…VVFVSPAPGG (73 aa)) constitute a Sm domain.

Belongs to the snRNP Sm proteins family.

The protein is Putative snRNP Sm-like protein of Archaeoglobus fulgidus (strain ATCC 49558 / DSM 4304 / JCM 9628 / NBRC 100126 / VC-16).